A 156-amino-acid polypeptide reads, in one-letter code: Sensor histidine kinase component HK2 (156 aa).

The Extracellular segment spans residues 1–42 (MALVLAAAGAVTVVQFRDAAHEADPDGALRGLTDDITADLVR). A helical transmembrane segment spans residues 43-63 (ELVTILPIVLVIAAVAAYLLS). Residues 64 to 120 (RAALRPVDRIRAAAQTLTTTPHPDTDAPLPVPPTDDEIAWLATTLNTMLTRLQRALA) enclose the HAMP domain. Residues 64–156 (RAALRPVDRI…RCAGPDPPTS (93 aa)) are Cytoplasmic-facing. The Histidine kinase; first part domain maps to 128–156 (DASHELRTPLALLTTELELRCAGPDPPTS). Phosphohistidine; by autocatalysis is present on His131.

As to quaternary structure, homodimer. Each monomer interacts with HK1 and the receiver domain of TcrA. Post-translationally, phosphorylated by HK1.

The protein localises to the cell membrane. The enzyme catalyses ATP + protein L-histidine = ADP + protein N-phospho-L-histidine.. Its function is as follows. Member of the three-protein two-component system HK1/HK2/TcrA. HK2 transfers its phosphoryl group to TcrA. In Mycobacterium tuberculosis (strain ATCC 25618 / H37Rv), this protein is Sensor histidine kinase component HK2.